Here is a 239-residue protein sequence, read N- to C-terminus: MVLPSSVSQWAALIALLCAGLANAHTVITYPGYRGNNLHTNGTVEQSNGLGQAEVNGSVIFPYGMEWMYPCGGMPTTTNRTKWPVGGGAIAIQPGWFQGHQTALIYINLGLGTIPPNMSHPMVPPFQITGPTNDPYPGTICLPQVPLPANTSVKPGDHATIQVIETAKHGAALYNCVDIEFAEPSEVEEVTRDNCFNSSIISFGEVFTTTSLTSAAAPKSSLMSVLPVYMVALLSWAMM.

Residues 1–24 form the signal peptide; that stretch reads MVLPSSVSQWAALIALLCAGLANA. Cu(2+) is bound at residue H25. N-linked (GlcNAc...) asparagine glycans are attached at residues N41, N56, N79, N117, N150, and N197. Intrachain disulfides connect C71–C176 and C141–C195. S214 carries the GPI-anchor amidated serine lipid modification. A propeptide spans 215–239 (removed in mature form); that stretch reads AAAPKSSLMSVLPVYMVALLSWAMM.

Belongs to the X325 family. The cofactor is Cu(2+).

The protein resides in the cell membrane. Its function is as follows. Lytic polysaccharide monooxygenase-like protein that has diverged to biological functions other than polysaccharide degradation since it does not perform oxidative cleavage of polysaccharides. Acts as a cell surface-bound protein that functions in the copper-accumulation pathway. May also act as the major cell wall sensor that regulates MAP kinase-dependent hyphal anastomosis, the fusion of hyphal cells. This chain is Lytic polysaccharide monooxygenase-like protein X325, found in Aspergillus fumigatus (strain ATCC MYA-4609 / CBS 101355 / FGSC A1100 / Af293) (Neosartorya fumigata).